We begin with the raw amino-acid sequence, 515 residues long: Transcription termination factor Rho (515 aa).

The 76-residue stretch at D146–D221 folds into the Rho RNA-BD domain. ATP-binding positions include G264–A269, K276–T281, and R307.

The protein belongs to the Rho family. In terms of assembly, homohexamer. The homohexamer assembles into an open ring structure.

Facilitates transcription termination by a mechanism that involves Rho binding to the nascent RNA, activation of Rho's RNA-dependent ATPase activity, and release of the mRNA from the DNA template. The chain is Transcription termination factor Rho from Borreliella burgdorferi (strain ATCC 35210 / DSM 4680 / CIP 102532 / B31) (Borrelia burgdorferi).